Consider the following 225-residue polypeptide: MPAQPLRDILEPGWAKALEPMADRIAAMGDFLRAEIAAGRSYLPAGQHVLRAFQQPFDDVRVLIVGQDPYPTPGMAIGYSFAVAPEVRRLPGSLENIFQELCADLSVPRPTNGDLTPWTRQGVLLLNRVLTTAPRQPGAHRGKGWEEVTEQAIRALAARGTPLVAILWGADARSLRPFLSPAPTIESAHPSPRSADRGFFGSRPFSRANNHLLEQGAQPVDWHLP.

The active-site Proton acceptor is the aspartate 68.

The protein belongs to the uracil-DNA glycosylase (UDG) superfamily. UNG family.

The protein localises to the cytoplasm. It catalyses the reaction Hydrolyzes single-stranded DNA or mismatched double-stranded DNA and polynucleotides, releasing free uracil.. Its function is as follows. Excises uracil residues from the DNA which can arise as a result of misincorporation of dUMP residues by DNA polymerase or due to deamination of cytosine. The sequence is that of Uracil-DNA glycosylase from Parafrankia sp. (strain EAN1pec).